The primary structure comprises 102 residues: MNKIRKGDEVIVITGKDKGKRGVVLAVGAEHVTVEGINLVKKHVKPNPMKGTTGGVEAKTMPLHISNVALVDANGKASRVGIKVEDGKKVRFLKTTGAVLSA.

The protein belongs to the universal ribosomal protein uL24 family. In terms of assembly, part of the 50S ribosomal subunit.

Functionally, one of two assembly initiator proteins, it binds directly to the 5'-end of the 23S rRNA, where it nucleates assembly of the 50S subunit. In terms of biological role, one of the proteins that surrounds the polypeptide exit tunnel on the outside of the subunit. The chain is Large ribosomal subunit protein uL24 from Burkholderia mallei (strain NCTC 10229).